A 330-amino-acid polypeptide reads, in one-letter code: Tyrosine-protein phosphatase yvh1 (330 aa).

The region spanning 45–187 is the Tyrosine-protein phosphatase domain; sequence NDLSEISKNL…LRVYFECNYQ (143 aa). The Phosphocysteine intermediate role is filled by cysteine 131.

This sequence belongs to the protein-tyrosine phosphatase family. Non-receptor class dual specificity subfamily.

The protein resides in the cytoplasm. Its subcellular location is the nucleus. It catalyses the reaction O-phospho-L-tyrosyl-[protein] + H2O = L-tyrosyl-[protein] + phosphate. Its function is as follows. May be directly involved in signal transduction and/or cell cycle regulation. It is necessary for maintaining growth rate or spore germination. Could show both activity toward tyrosine-protein phosphate as well as with serine-protein phosphate. This chain is Tyrosine-protein phosphatase yvh1 (yvh1), found in Schizosaccharomyces pombe (strain 972 / ATCC 24843) (Fission yeast).